Here is a 268-residue protein sequence, read N- to C-terminus: ClpXP adapter protein SpxH (268 aa).

This sequence belongs to the SpxH family. In terms of assembly, interacts with Spx.

Its subcellular location is the cytoplasm. Functionally, adapter protein required for efficient degradation of Spx by ClpXP under non-stress conditions. Interaction with Spx stabilizes Spx and exposes the C-terminus of Spx for recognition and proteolysis by ClpXP. In Staphylococcus aureus (strain Mu3 / ATCC 700698), this protein is ClpXP adapter protein SpxH.